The following is a 671-amino-acid chain: MDKHQAEKRLKELRLLLEDYGYHYYVLDTPKVPDSEYDRLMNELLQLEADYPDLVTEDSPSVRIGGPPAPSFKKVAHRVPMMSLSNAFNEEDLRAFDRRVRQAVGEHVSYVCELKFDGLAVSLTYENGKLVRGATRGDGTIGEDITNNLRTVPAIPLRLKQPYSIEVRGEAYMPKASFERLNEAKEQAGEEKFANPRNAAAGSLRQLDPKIAAKRNLSLFAYSIGEVEGKNVQTHFDSLMFLKELGFKVNEEAAECETIEDVIAYTEKWSERRHELPYEIDGVVVKVNSLADHEKLGFTAKSPRWATAFKFPAEEVLTVLRDIELNVGRTGVVTPTALLDPVLVAGTTVRRASLHNEDLIREKDVKLGDTVIVKKAGDIIPEVVGVLTDKRTGEEVDFHMPTECPECHSVLERLEGEVALRCLNPKCPAQIREGLIHFVSRNAMNIDGLGEKVISQLFLHQLIADVADLYLLEREELLQLERMGEKSVDNLLAAIEASKENSLERLLFGLGIRFVGAKAAKTLAYEFETMERLQEATFEQLLAVNEIGEKMADSIVSYFQKPEVATLLEKLANAGVNMTYTGPKKAAIAEEAGVFAGKTVVLTGKLSQWTRKEAQEKIEALGGTVTGSVSKKTDLVVAGEDAGSKQKKAESIGIEIWTEEQFTQAVEQSEQ.

Residues 34-38 (DSEYD), 83-84 (SL), and Glu-113 each bind NAD(+). Lys-115 serves as the catalytic N6-AMP-lysine intermediate. NAD(+) is bound by residues Arg-136, Glu-170, Lys-286, and Lys-310. Zn(2+) is bound by residues Cys-404, Cys-407, Cys-422, and Cys-427. One can recognise a BRCT domain in the interval 590 to 671 (EEAGVFAGKT…FTQAVEQSEQ (82 aa)).

Belongs to the NAD-dependent DNA ligase family. LigA subfamily. It depends on Mg(2+) as a cofactor. The cofactor is Mn(2+).

The catalysed reaction is NAD(+) + (deoxyribonucleotide)n-3'-hydroxyl + 5'-phospho-(deoxyribonucleotide)m = (deoxyribonucleotide)n+m + AMP + beta-nicotinamide D-nucleotide.. Functionally, DNA ligase that catalyzes the formation of phosphodiester linkages between 5'-phosphoryl and 3'-hydroxyl groups in double-stranded DNA using NAD as a coenzyme and as the energy source for the reaction. It is essential for DNA replication and repair of damaged DNA. The protein is DNA ligase of Shouchella clausii (strain KSM-K16) (Alkalihalobacillus clausii).